Consider the following 56-residue polypeptide: Ovomucoid (56 aa).

Residues Val-6–Cys-56 form the Kazal-like domain. 3 cysteine pairs are disulfide-bonded: Cys-8/Cys-38, Cys-16/Cys-35, and Cys-24/Cys-56. A glycan (N-linked (GlcNAc...) asparagine) is linked at Asn-45.

The protein localises to the secreted. This is Ovomucoid from Bambusicola thoracicus (Chinese bamboo-partridge).